A 295-amino-acid polypeptide reads, in one-letter code: Sulfotransferase 1A2 (295 aa).

Residue 48–53 coordinates 3'-phosphoadenylyl sulfate; the sequence is KSGTTW. 106–108 contributes to the substrate binding site; sequence KTH. The active-site Proton acceptor is the H108. 3'-phosphoadenylyl sulfate contacts are provided by residues R130, S138, Y193, 227-232, and 255-259; these read TSFKEM and FMRKG.

The protein belongs to the sulfotransferase 1 family. As to quaternary structure, homodimer.

It localises to the cytoplasm. It catalyses the reaction a phenol + 3'-phosphoadenylyl sulfate = an aryl sulfate + adenosine 3',5'-bisphosphate + H(+). Its function is as follows. Sulfotransferase that utilizes 3'-phospho-5'-adenylyl sulfate (PAPS) as sulfonate donor to catalyze the sulfate conjugation of catecholamines, phenolic drugs and neurotransmitters. Is also responsible for the sulfonation and activation of minoxidil. Mediates the metabolic activation of carcinogenic N-hydroxyarylamines to DNA binding products and could so participate as modulating factor of cancer risk. The polypeptide is Sulfotransferase 1A2 (SULT1A2) (Homo sapiens (Human)).